Reading from the N-terminus, the 946-residue chain is Protein translocase subunit SecA (946 aa).

ATP is bound by residues glutamine 87, 105-109 (GEGKT), and aspartate 524. The segment at 905–926 (APASDAAQRDPKNPASWGKIGR) is disordered. Residues cysteine 930, cysteine 932, cysteine 941, and histidine 942 each contribute to the Zn(2+) site.

It belongs to the SecA family. In terms of assembly, monomer and homodimer. Part of the essential Sec protein translocation apparatus which comprises SecA, SecYEG and auxiliary proteins SecDF-YajC and YidC. The cofactor is Zn(2+).

The protein resides in the cell inner membrane. It is found in the cytoplasm. The catalysed reaction is ATP + H2O + cellular proteinSide 1 = ADP + phosphate + cellular proteinSide 2.. Its function is as follows. Part of the Sec protein translocase complex. Interacts with the SecYEG preprotein conducting channel. Has a central role in coupling the hydrolysis of ATP to the transfer of proteins into and across the cell membrane, serving both as a receptor for the preprotein-SecB complex and as an ATP-driven molecular motor driving the stepwise translocation of polypeptide chains across the membrane. This is Protein translocase subunit SecA from Bradyrhizobium diazoefficiens (strain JCM 10833 / BCRC 13528 / IAM 13628 / NBRC 14792 / USDA 110).